Consider the following 657-residue polypeptide: Splicing factor Cactin (657 aa).

The segment covering 1-15 (MGKDSKKHKKERRRE) has biased composition (basic residues). Disordered stretches follow at residues 1-83 (MGKD…EDTL), 369-406 (QESEELLPVAEVPPQVKIQKEEEEEEEEDEDDEKISKK), and 472-503 (ADVDNLTERRNRNRGTLPSSSAASSGAPQGAS). Coiled-coil stretches lie at residues 23–77 (SDEE…RKDA) and 352–403 (RLQL…DEKI). Basic and acidic residues predominate over residues 26-60 (ERLQKRLAEQRSLKKDEKRRQKEEMKKNESAEEKR). A compositionally biased stretch (basic residues) spans 61-72 (ARRMEKKMRKDA). The segment covering 389–401 (EEEEEEEEDEDDE) has biased composition (acidic residues). The span at 489 to 503 (PSSSAASSGAPQGAS) shows a compositional bias: low complexity.

It belongs to the CACTIN family. In terms of tissue distribution, expressed in pharynx, intestine, vulva and spermatheca (at protein level).

The protein resides in the nucleus. It is found in the cytoplasm. Functionally, plays a role in pre-mRNA splicing by facilitating excision of a subset of introns. Plays a role during early embryonic development. Required for the distal tip cell migration at the end of larval development and for gonad morphogenesis. In Caenorhabditis elegans, this protein is Splicing factor Cactin (cacn-1).